A 161-amino-acid polypeptide reads, in one-letter code: Endoribonuclease YbeY (161 aa).

Zn(2+) is bound by residues His121, His125, and His131.

It belongs to the endoribonuclease YbeY family. The cofactor is Zn(2+).

Its subcellular location is the cytoplasm. In terms of biological role, single strand-specific metallo-endoribonuclease involved in late-stage 70S ribosome quality control and in maturation of the 3' terminus of the 16S rRNA. In Xanthomonas oryzae pv. oryzae (strain MAFF 311018), this protein is Endoribonuclease YbeY.